Consider the following 460-residue polypeptide: Probable serine/threonine-protein kinase kinase DDB_G0280557 (460 aa).

The 315-residue stretch at 102-416 (INLKSITDCG…IDQLLAHKYF (315 aa)) folds into the Protein kinase domain. ATP contacts are provided by residues Lys131 and 154–162 (QRHFQQHPL). Asp250 (proton acceptor) is an active-site residue.

Belongs to the protein kinase superfamily. CMGC Ser/Thr protein kinase family. MAP kinase subfamily.

The enzyme catalyses L-seryl-[protein] + ATP = O-phospho-L-seryl-[protein] + ADP + H(+). It carries out the reaction L-threonyl-[protein] + ATP = O-phospho-L-threonyl-[protein] + ADP + H(+). In Dictyostelium discoideum (Social amoeba), this protein is Probable serine/threonine-protein kinase kinase DDB_G0280557.